A 1242-amino-acid polypeptide reads, in one-letter code: von Willebrand factor A domain-containing protein 5B2 (1242 aa).

Residues 1-138 (MPGLYCPSSW…TMTVTLHSSR (138 aa)) form the VIT domain. The VWFA domain occupies 354 to 527 (ELLFLLDSSS…KALEPALSDI (174 aa)). 6 disordered regions span residues 569–650 (SRPP…SDTA), 670–726 (CSAS…CPLP), 751–794 (LAGR…GQGL), 957–976 (CSSEPAEPPGTPPASHSHLD), 987–1055 (KGLQ…GSDH), and 1118–1159 (QGDS…GLGG). A compositionally biased stretch (low complexity) spans 588 to 604 (PSPEEAPSAASPGTEPT). The span at 605-619 (GTSEPLGTGTVSAEL) shows a compositional bias: polar residues. Residues 681–700 (TGSSESPGSQGPGSPEGSAP) are compositionally biased toward low complexity. Positions 1125-1138 (SCSPSPSSGSEGPG) are enriched in low complexity.

This Homo sapiens (Human) protein is von Willebrand factor A domain-containing protein 5B2 (VWA5B2).